A 308-amino-acid chain; its full sequence is Mannan endo-1,4-beta-mannosidase (308 aa).

Glutamate 125 (proton donor) is an active-site residue. Glutamate 220 acts as the Nucleophile in catalysis. The segment at 284–308 (DGLQETSKPSTVFTDDNGGHPEPPT) is disordered. The span at 287-297 (QETSKPSTVFT) shows a compositional bias: polar residues.

Belongs to the glycosyl hydrolase 5 (cellulase A) family.

It catalyses the reaction Random hydrolysis of (1-&gt;4)-beta-D-mannosidic linkages in mannans, galactomannans and glucomannans.. Catalyzes the endo hydrolysis of beta-1,4-linked mannan, galactomannan and glucomannan. It is able to hydrolyze mannosidic linkages that are flanked by mannose or glucose. This chain is Mannan endo-1,4-beta-mannosidase, found in Salipaludibacillus agaradhaerens (Bacillus agaradhaerens).